The chain runs to 355 residues: UDP-3-O-acylglucosamine N-acyltransferase (355 aa).

The active-site Proton acceptor is the His258.

The protein belongs to the transferase hexapeptide repeat family. LpxD subfamily. As to quaternary structure, homotrimer.

The catalysed reaction is a UDP-3-O-[(3R)-3-hydroxyacyl]-alpha-D-glucosamine + a (3R)-hydroxyacyl-[ACP] = a UDP-2-N,3-O-bis[(3R)-3-hydroxyacyl]-alpha-D-glucosamine + holo-[ACP] + H(+). It participates in bacterial outer membrane biogenesis; LPS lipid A biosynthesis. In terms of biological role, catalyzes the N-acylation of UDP-3-O-acylglucosamine using 3-hydroxyacyl-ACP as the acyl donor. Is involved in the biosynthesis of lipid A, a phosphorylated glycolipid that anchors the lipopolysaccharide to the outer membrane of the cell. This Bradyrhizobium sp. (strain BTAi1 / ATCC BAA-1182) protein is UDP-3-O-acylglucosamine N-acyltransferase.